A 345-amino-acid chain; its full sequence is L-threonine 3-dehydrogenase (345 aa).

Cys-39 provides a ligand contact to Zn(2+). Catalysis depends on charge relay system residues Thr-41 and His-44. Positions 64, 65, 94, 97, 100, and 108 each coordinate Zn(2+). NAD(+) contacts are provided by residues Ile-176, Asp-196, Arg-201, 263–265 (LGI), and 287–288 (VY).

Belongs to the zinc-containing alcohol dehydrogenase family. In terms of assembly, homotetramer. It depends on Zn(2+) as a cofactor.

It is found in the cytoplasm. The catalysed reaction is L-threonine + NAD(+) = (2S)-2-amino-3-oxobutanoate + NADH + H(+). The protein operates within amino-acid degradation; L-threonine degradation via oxydo-reductase pathway; glycine from L-threonine: step 1/2. Catalyzes the NAD(+)-dependent oxidation of L-threonine to 2-amino-3-ketobutyrate. The chain is L-threonine 3-dehydrogenase from Anaeromyxobacter sp. (strain K).